The sequence spans 287 residues: Elongation factor Ts (287 aa).

The tract at residues Thr81–Val84 is involved in Mg(2+) ion dislocation from EF-Tu.

Belongs to the EF-Ts family.

The protein localises to the cytoplasm. Functionally, associates with the EF-Tu.GDP complex and induces the exchange of GDP to GTP. It remains bound to the aminoacyl-tRNA.EF-Tu.GTP complex up to the GTP hydrolysis stage on the ribosome. The sequence is that of Elongation factor Ts from Nitratidesulfovibrio vulgaris (strain ATCC 29579 / DSM 644 / CCUG 34227 / NCIMB 8303 / VKM B-1760 / Hildenborough) (Desulfovibrio vulgaris).